Reading from the N-terminus, the 435-residue chain is Trigger factor (435 aa).

The PPIase FKBP-type domain maps to 163–248 (GDRVTIDFEG…LTRIEAQNLP (86 aa)).

This sequence belongs to the FKBP-type PPIase family. Tig subfamily.

It localises to the cytoplasm. It catalyses the reaction [protein]-peptidylproline (omega=180) = [protein]-peptidylproline (omega=0). Its function is as follows. Involved in protein export. Acts as a chaperone by maintaining the newly synthesized protein in an open conformation. Functions as a peptidyl-prolyl cis-trans isomerase. This Leptothrix cholodnii (strain ATCC 51168 / LMG 8142 / SP-6) (Leptothrix discophora (strain SP-6)) protein is Trigger factor.